The chain runs to 106 residues: Small ribosomal subunit protein uS10 (106 aa).

It belongs to the universal ribosomal protein uS10 family. As to quaternary structure, part of the 30S ribosomal subunit.

Functionally, involved in the binding of tRNA to the ribosomes. This is Small ribosomal subunit protein uS10 from Wolbachia sp. subsp. Drosophila simulans (strain wRi).